The sequence spans 397 residues: B3 domain-containing protein At4g34400 (397 aa).

A DNA-binding region (TF-B3) is located at residues 14–107; it reads PRFFTVFVSH…IFEVSIFRGY (94 aa). The segment at 118 to 255 is disordered; that stretch reads ELEEEEEDSV…SSYAPDKEDT (138 aa). The segment covering 137–160 has biased composition (basic and acidic residues); that stretch reads TGAKSEMKNTVPEGRDKGKSKVEV. 3 stretches are compositionally biased toward acidic residues: residues 161–186, 212–227, and 235–246; these read VEDS…TDTD, SSDD…DSDY, and DIEENSISEEDS.

Its subcellular location is the nucleus. This Arabidopsis thaliana (Mouse-ear cress) protein is B3 domain-containing protein At4g34400.